A 348-amino-acid polypeptide reads, in one-letter code: Nicotinate-nucleotide--dimethylbenzimidazole phosphoribosyltransferase (348 aa).

E317 serves as the catalytic Proton acceptor.

Belongs to the CobT family.

The enzyme catalyses 5,6-dimethylbenzimidazole + nicotinate beta-D-ribonucleotide = alpha-ribazole 5'-phosphate + nicotinate + H(+). Its pathway is nucleoside biosynthesis; alpha-ribazole biosynthesis; alpha-ribazole from 5,6-dimethylbenzimidazole: step 1/2. In terms of biological role, catalyzes the synthesis of alpha-ribazole-5'-phosphate from nicotinate mononucleotide (NAMN) and 5,6-dimethylbenzimidazole (DMB). This is Nicotinate-nucleotide--dimethylbenzimidazole phosphoribosyltransferase from Clostridioides difficile (strain 630) (Peptoclostridium difficile).